Consider the following 661-residue polypeptide: Chermesin D/asnovolin J monooxidase nvfH (661 aa).

N-linked (GlcNAc...) asparagine glycosylation is present at Asn-12. A helical membrane pass occupies residues Val-89–Phe-111. Residues Thr-128–Trp-131, Asp-140–Val-141, and Tyr-146 contribute to the FAD site. Met-138–Asp-140 is a binding site for NADP(+). NADP(+)-binding positions include Thr-286 to Gln-292 and Arg-309 to Thr-310. N-linked (GlcNAc...) asparagine glycosylation is found at Asn-382 and Asn-538.

It belongs to the FAD-binding monooxygenase family. Requires FAD as cofactor.

Its subcellular location is the membrane. It catalyses the reaction chermesin D + AH2 + O2 = asnovolin I + A + H2O. It carries out the reaction asnovolin J + AH2 + O2 = asnovolin A + A + H2O. It participates in secondary metabolite biosynthesis; terpenoid biosynthesis. Its function is as follows. Chermesin D/asnovolin J monooxidase; part of the gene cluster that mediates the biosynthesis of novofumigatonin, a heavily oxygenated meroterpenoid containing a unique orthoester moiety. The first step of the pathway is the synthesis of 3,5-dimethylorsellinic acid (DMOA) by the polyketide synthase nvfA via condensation of one acetyl-CoA starter unit with 3 malonyl-CoA units and 2 methylations. DMOA is then converted to farnesyl-DMOA by the farnesyltransferase nvfB. Epoxydation by FAD-dependent monooxygenase nvfK, followed by a protonation-initiated cyclization catalyzed by the terpene cyclase nvfL leads to the production of asnavolin H. The short chain dehydrogenase nvfC then as a 3-OH dehydrogenase of asnovolin H to yield chemesin D. There are two branches to synthesize asnovolin A from chemesin D. In one branch, chemesin D undergoes Baeyer-Villiger oxidation by nvfH, methylation by nvfJ, and enoyl reduction by the nvfM D enoylreductase that reduces the double bond between C-5'and C-6', to form respectively asnovolin I, asnovolin K, and asnovolin A. In the other branch, the methylation precedes the Baeyer-Villiger oxidation and the enoyl reduction to yield asnovolin A via the asnovolin J intermediate. Asnovolin A is further converted to fumigatonoid A by the Fe(II)/2-oxoglutarate-dependent dioxygenase nvfI that catalyzes an endoperoxidation reaction. The alpha/beta hydrolase nvfD then acts as an epimerase that converts fumigatonoid A to its C-5' epimer, which then undergoes spontaneous or nvfD-catalyzed lactonization. The following step utilizes the ketoreductase nvfG to produce fumigatonoid B. The dioxygenase nvfE further converts fumigatonoid B into fumigatonoid C. Finally the Fe(II)/2-oxoglutarate-dependent dioxygenase nvfF catalyzes two rounds of oxidation to transform fumigatonoid C into the end product, novofumigatonin A. In Aspergillus novofumigatus (strain IBT 16806), this protein is Chermesin D/asnovolin J monooxidase nvfH.